Here is a 390-residue protein sequence, read N- to C-terminus: Queuine tRNA-ribosyltransferase (390 aa).

D92 serves as the catalytic Proton acceptor. Residues 92-96 (DSGGF), D146, Q195, and G222 contribute to the substrate site. The segment at 253–259 (GVGTPED) is RNA binding. The Nucleophile role is filled by D272. The tract at residues 277–281 (TRNAR) is RNA binding; important for wobble base 34 recognition. Zn(2+) contacts are provided by C310, C312, C315, and H354.

The protein belongs to the queuine tRNA-ribosyltransferase family. As to quaternary structure, homodimer. Within each dimer, one monomer is responsible for RNA recognition and catalysis, while the other monomer binds to the replacement base PreQ1. Zn(2+) is required as a cofactor.

The enzyme catalyses 7-aminomethyl-7-carbaguanine + guanosine(34) in tRNA = 7-aminomethyl-7-carbaguanosine(34) in tRNA + guanine. Its pathway is tRNA modification; tRNA-queuosine biosynthesis. Its function is as follows. Catalyzes the base-exchange of a guanine (G) residue with the queuine precursor 7-aminomethyl-7-deazaguanine (PreQ1) at position 34 (anticodon wobble position) in tRNAs with GU(N) anticodons (tRNA-Asp, -Asn, -His and -Tyr). Catalysis occurs through a double-displacement mechanism. The nucleophile active site attacks the C1' of nucleotide 34 to detach the guanine base from the RNA, forming a covalent enzyme-RNA intermediate. The proton acceptor active site deprotonates the incoming PreQ1, allowing a nucleophilic attack on the C1' of the ribose to form the product. After dissociation, two additional enzymatic reactions on the tRNA convert PreQ1 to queuine (Q), resulting in the hypermodified nucleoside queuosine (7-(((4,5-cis-dihydroxy-2-cyclopenten-1-yl)amino)methyl)-7-deazaguanosine). The polypeptide is Queuine tRNA-ribosyltransferase (Acidovorax ebreus (strain TPSY) (Diaphorobacter sp. (strain TPSY))).